The chain runs to 235 residues: Transmembrane emp24 domain-containing protein 9 (235 aa).

The signal sequence occupies residues 1–37 (MAVELGVLLVRPRPGTGLGRVMRTLLLVLWLATRGSA). Residues 38 to 202 (LYFHIGETEK…RQTSESTNQR (165 aa)) are Lumenal-facing. The GOLD domain occupies 47 to 145 (KKCFIEEIPD…MLRVHLDIQV (99 aa)). Residues 121–160 (CLHSNSTKFSLFAGGMLRVHLDIQVGEHANDYAEIAAKDK) are required for interaction with STX17. Asn125 carries an N-linked (GlcNAc...) asparagine glycan. Residues 154-184 (EIAAKDKLSELQLRVRQLVEQVEQIQKEQNY) are a coiled coil. Position 160 is an N6-acetyllysine (Lys160). The helical transmembrane segment at 203 to 222 (VLWWSILQTLILVAIGVWQM) threads the bilayer. Over 223 to 235 (RHLKSFFEAKKLV) the chain is Cytoplasmic. Residues 228 to 229 (FF) carry the COPII vesicle coat-binding motif. A COPI vesicle coat-binding motif is present at residues 228–235 (FFEAKKLV).

The protein belongs to the EMP24/GP25L family. In terms of assembly, monomer and homodimer in endoplasmic reticulum. Predominantly monomeric and to lesser extent homodimeric in endoplasmic reticulum-Golgi intermediate compartment and cis-Golgi network. Probably oligomerizes with other members of the EMP24/GP25L family such as TMED2, TMED7 and TMED10. Interacts with TMED5. Interacts (via C-terminus) with COPG1; the interaction involves dimeric TMED9. Interacts with PTPN2 and SPAST. Interacts with STX17; the interaction is direct. Post-translationally, N-linked glycosylated containing high mannose.

It localises to the endoplasmic reticulum membrane. It is found in the golgi apparatus. The protein localises to the cis-Golgi network membrane. Its subcellular location is the endoplasmic reticulum-Golgi intermediate compartment membrane. The protein resides in the trans-Golgi network membrane. In terms of biological role, appears to be involved in vesicular protein trafficking, mainly in the early secretory pathway. In COPI vesicle-mediated retrograde transport involved in the coatomer recruitment to membranes of the early secretory pathway. Increases coatomer-dependent activity of ARFGAP2. Thought to play a crucial role in the specific retention of p24 complexes in cis-Golgi membranes; specifically contributes to the coupled localization of TMED2 and TMED10 in the cis-Golgi network. May be involved in organization of intracellular membranes, such as of the ER-Golgi intermediate compartment and the Golgi apparatus. Involved in ER localization of PTPN2 isoform PTPB. This is Transmembrane emp24 domain-containing protein 9 (TMED9) from Homo sapiens (Human).